Here is a 150-residue protein sequence, read N- to C-terminus: Developmental pluripotency-associated protein 3 (150 aa).

Over residues 1-22 the composition is skewed to basic and acidic residues; the sequence is MEEPSEKVDPMKDPETPQKKDE. The interval 1 to 32 is disordered; sequence MEEPSEKVDPMKDPETPQKKDEEDALDDTDVL. The tract at residues 1–75 is required for H3K9me2-binding; the sequence is MEEPSEKVDP…VPVENKSEKI (75 aa). The segment at 76 to 150 is required to exclude TET3 from the maternal pronucleus; that stretch reads RREVQSAFPK…PSENAKIGKN (75 aa).

Expressed in the immature oocytes and in newborn ovaries. Subsequently detected in maturing oocytes and in preimplantation embryos. Expressed in pluripotent embryonic but not in differentiated somatic cells. Expressed in blastocysts, epiblasts, primordial germ cells, embryonic gonads and primitive spermatogonia. No expression is detected in adult testes.

It is found in the nucleus. The protein localises to the cytoplasm. Primordial germ cell (PGCs)-specific protein involved in epigenetic chromatin reprogramming in the zygote following fertilization. In zygotes, DNA demethylation occurs selectively in the paternal pronucleus before the first cell division, while the adjacent maternal pronucleus and certain paternally-imprinted loci are protected from this process. Participates in protection of DNA methylation in the maternal pronucleus by preventing conversion of 5mC to 5hmC: specifically recognizes and binds histone H3 dimethylated at 'Lys-9' (H3K9me2) on maternal genome, and protects maternal genome from TET3-mediated conversion to 5hmC and subsequent DNA demethylation. Does not bind paternal chromatin, which is mainly packed into protamine and does not contain much H3K9me2 mark. Also protects imprinted loci that are marked with H3K9me2 in mature sperm from DNA demethylation in early embryogenesis. May be important for the totipotent/pluripotent states continuing through preimplantation development. Also involved in chromatin condensation in oocytogenesis. This Mus musculus (Mouse) protein is Developmental pluripotency-associated protein 3 (Dppa3).